Reading from the N-terminus, the 284-residue chain is 2-dehydro-3-deoxyphosphooctonate aldolase (284 aa).

It belongs to the KdsA family.

Its subcellular location is the cytoplasm. It catalyses the reaction D-arabinose 5-phosphate + phosphoenolpyruvate + H2O = 3-deoxy-alpha-D-manno-2-octulosonate-8-phosphate + phosphate. It functions in the pathway carbohydrate biosynthesis; 3-deoxy-D-manno-octulosonate biosynthesis; 3-deoxy-D-manno-octulosonate from D-ribulose 5-phosphate: step 2/3. It participates in bacterial outer membrane biogenesis; lipopolysaccharide biosynthesis. This chain is 2-dehydro-3-deoxyphosphooctonate aldolase, found in Klebsiella pneumoniae subsp. pneumoniae (strain ATCC 700721 / MGH 78578).